A 145-amino-acid chain; its full sequence is Small ribosomal subunit protein bS16 (145 aa).

The segment at Ile82–Ala145 is disordered. Residues Glu95 to Ala115 show a composition bias toward basic and acidic residues. The segment covering Glu116–Ala137 has biased composition (low complexity).

The protein belongs to the bacterial ribosomal protein bS16 family.

This is Small ribosomal subunit protein bS16 from Novosphingobium aromaticivorans (strain ATCC 700278 / DSM 12444 / CCUG 56034 / CIP 105152 / NBRC 16084 / F199).